Here is an 865-residue protein sequence, read N- to C-terminus: Outer membrane usher protein HtrE (865 aa).

The first 29 residues, 1-29 (MTIEYTKNYHHLTRIATFCALLYCNTAFS), serve as a signal peptide directing secretion. C838 and C862 are disulfide-bonded.

Belongs to the fimbrial export usher family.

The protein resides in the cell outer membrane. Part of the yadCKLM-htrE-yadVN fimbrial operon. Could contribute to adhesion to various surfaces in specific environmental niches. Probably involved in the export and assembly of fimbrial subunits across the outer membrane. The sequence is that of Outer membrane usher protein HtrE (htrE) from Escherichia coli (strain K12).